Here is a 353-residue protein sequence, read N- to C-terminus: MIQLWGDSRLRSKNDTILKAIKGESTSHTPVWFMRQAGRSQPEYRKLKEKYSLFEITHQPELCAYVTHLPVDNYQTDAAVLYKDIMTPLKPIGVDVEIKSGIGPVISNPIQTVKDVERLSQIDPKRDVPYVLDTIKLLTEEKLNVPLIGFTGAPFTLASYMIEGGPSKNYNFTKAMMYRDEETWFALMNHLVDISIDYVVAQVEAGAEIIQIFDSWVGALNVKDYRYYIKPAMNKLISGIKAYYDVPIILFGVGASHLINEWNDLPIDVLGLDWRTTIKQADKMGVNKAIQGNLDPSILLAPWDVIESRLKDILNQGLNRGKYIFNLGHGVFPEVKPETLRKVTEFVHNYTAK.

Residues 35-39 (RQAGR), Phe-54, Asp-84, Tyr-160, Ser-215, and His-329 each bind substrate.

This sequence belongs to the uroporphyrinogen decarboxylase family. As to quaternary structure, homodimer.

It is found in the cytoplasm. The catalysed reaction is uroporphyrinogen III + 4 H(+) = coproporphyrinogen III + 4 CO2. The protein operates within porphyrin-containing compound metabolism; protoporphyrin-IX biosynthesis; coproporphyrinogen-III from 5-aminolevulinate: step 4/4. In terms of biological role, catalyzes the decarboxylation of four acetate groups of uroporphyrinogen-III to yield coproporphyrinogen-III. The polypeptide is Uroporphyrinogen decarboxylase (Staphylococcus epidermidis (strain ATCC 12228 / FDA PCI 1200)).